The chain runs to 101 residues: Ascorbate-specific PTS system EIIB component (101 aa).

Residues 1 to 100 (MTVRILAVCG…VIKEHFPQDV (100 aa)) form the PTS EIIB type-2 domain. Residue cysteine 9 is the Phosphocysteine intermediate of the active site. Position 9 is a phosphocysteine (cysteine 9).

The protein resides in the cytoplasm. It carries out the reaction N(pros)-phospho-L-histidyl-[protein] + L-ascorbate(out) = L-ascorbate 6-phosphate(in) + L-histidyl-[protein]. Its function is as follows. The phosphoenolpyruvate-dependent sugar phosphotransferase system (sugar PTS), a major carbohydrate active transport system, catalyzes the phosphorylation of incoming sugar substrates concomitantly with their translocation across the cell membrane. The enzyme II UlaABC PTS system is involved in ascorbate transport. In Escherichia coli O157:H7, this protein is Ascorbate-specific PTS system EIIB component (ulaB).